Reading from the N-terminus, the 631-residue chain is Mitochondrial Rho GTPase (631 aa).

Residues 1 to 605 (MRAGRVRPLR…TQADLKSSTF (605 aa)) are Cytoplasmic-facing. The region spanning 15–181 (KKDVRILLVG…FYYAQKAVLH (167 aa)) is the Miro 1 domain. GTP-binding residues include arginine 27, glycine 29, lysine 30, threonine 31, and serine 32. Threonine 31 is a Mg(2+) binding site. Aspartate 70 serves as a coordination point for Mg(2+). Serine 72 contributes to the GTP binding site. At lysine 105 the chain carries N6-acetyllysine. GTP-binding residues include asparagine 131, lysine 132, aspartate 134, alanine 162, and lysine 163. Lysine 166 participates in a covalent cross-link: Glycyl lysine isopeptide (Lys-Gly) (interchain with G-Cter in ubiquitin). The EF-hand 1 domain maps to 197 to 232 (ACIKALTRIFKISDQDNDGTLNDAELNFFQRICFNT). Positions 210, 212, 214, 216, and 221 each coordinate Ca(2+). Lysine 248 participates in a covalent cross-link: Glycyl lysine isopeptide (Lys-Gly) (interchain with G-Cter in ubiquitin). Residues 317–352 (HAYLFLQSTFDKHDLDRDCALSPDELKDLFQVFPYI) form the EF-hand 2 domain. Aspartate 330, aspartate 332, aspartate 334, alanine 336, and glutamate 341 together coordinate Ca(2+). Residues 429-592 (RNVFRCNVIG…FVKLTTMAMY (164 aa)) form the Miro 2 domain. The GTP site is built by glycine 441, cysteine 442, glycine 443, lysine 444, threonine 445, glycine 446, lysine 460, lysine 541, aspartate 543, threonine 571, and cysteine 572. Glycine 441 serves as a coordination point for Mg(2+). Lysine 585 participates in a covalent cross-link: Glycyl lysine isopeptide (Lys-Gly) (interchain with G-Cter in ubiquitin). A helical; Anchor for type IV membrane protein membrane pass occupies residues 606-628 (WLRASFGATVFAVVGFAMYRALL). Over 629 to 631 (KQR) the chain is Mitochondrial intermembrane.

It belongs to the mitochondrial Rho GTPase family. In terms of assembly, homodimer. Interacts with the kinesin-binding proteins TRAK1/OIP106 and TRAK2/GRIF1, forming a link between mitochondria and the trafficking apparatus of the microtubules. Interacts with RAP1GDS1. Interacts with ARMCX1. Found in a complex with KIF5B, OGT, RHOT2 and TRAK1. Ubiquitinated by PRKN during mitophagy, leading to its degradation and enhancement of mitophagy. Deubiquitinated by USP30. In terms of processing, acetylation on Lys-105 decreases sensitivity of mitochondrial transport to elevated Ca(2+) levels, increases mitochondrial transport and promotes axon growth. Deacetylated by HDAC6 which blocks mitochondrial transport and mediates axon growth inhibition.

It localises to the mitochondrion outer membrane. It carries out the reaction GTP + H2O = GDP + phosphate + H(+). It catalyses the reaction ATP + H2O = ADP + phosphate + H(+). The catalysed reaction is UTP + H2O = UDP + phosphate + H(+). Atypical mitochondrial nucleoside-triphosphatase (NTPase) involved in mitochondrial trafficking. Probably involved in control of anterograde transport of mitochondria and their subcellular distribution. Promotes mitochondrial fission during high calcium conditions. Can hydrolyze GTP, ATP and UTP. This Rattus norvegicus (Rat) protein is Mitochondrial Rho GTPase.